A 1107-amino-acid chain; its full sequence is DNA-directed RNA polymerase subunit beta (1107 aa).

The segment covering 1062 to 1075 has biased composition (basic and acidic residues); sequence DNEGNEKEKARELG. The segment at 1062 to 1081 is disordered; it reads DNEGNEKEKARELGLDLPDN.

The protein belongs to the RNA polymerase beta chain family. In terms of assembly, the RNAP catalytic core consists of 2 alpha, 1 beta, 1 beta' and 1 omega subunit. When a sigma factor is associated with the core the holoenzyme is formed, which can initiate transcription.

It carries out the reaction RNA(n) + a ribonucleoside 5'-triphosphate = RNA(n+1) + diphosphate. In terms of biological role, DNA-dependent RNA polymerase catalyzes the transcription of DNA into RNA using the four ribonucleoside triphosphates as substrates. The sequence is that of DNA-directed RNA polymerase subunit beta from Syntrophomonas wolfei subsp. wolfei (strain DSM 2245B / Goettingen).